Consider the following 316-residue polypeptide: tRNA dimethylallyltransferase (316 aa).

17–24 (GPTASGKT) provides a ligand contact to ATP. 19-24 (TASGKT) provides a ligand contact to substrate. Interaction with substrate tRNA stretches follow at residues 42 to 45 (DSAL), 166 to 170 (QRLSR), 247 to 252 (RCVGYR), and 280 to 287 (KRQITWLR).

It belongs to the IPP transferase family. In terms of assembly, monomer. Requires Mg(2+) as cofactor.

The catalysed reaction is adenosine(37) in tRNA + dimethylallyl diphosphate = N(6)-dimethylallyladenosine(37) in tRNA + diphosphate. Functionally, catalyzes the transfer of a dimethylallyl group onto the adenine at position 37 in tRNAs that read codons beginning with uridine, leading to the formation of N6-(dimethylallyl)adenosine (i(6)A). The chain is tRNA dimethylallyltransferase from Escherichia coli O6:K15:H31 (strain 536 / UPEC).